Consider the following 635-residue polypeptide: DNA topoisomerase 4 subunit B (635 aa).

Residues tyrosine 5, asparagine 45, aspartate 72, 113-119 (GLHGVGA), and lysine 340 contribute to the ATP site. The Toprim domain maps to 422 to 537 (RELFVVEGDS…KGHIYLALPP (116 aa)). Residues glutamate 428, aspartate 502, and aspartate 504 each contribute to the Mg(2+) site.

Belongs to the type II topoisomerase family. ParE type 2 subfamily. As to quaternary structure, heterotetramer composed of ParC and ParE. Mg(2+) is required as a cofactor. It depends on Mn(2+) as a cofactor. Ca(2+) serves as cofactor.

The catalysed reaction is ATP-dependent breakage, passage and rejoining of double-stranded DNA.. Topoisomerase IV is essential for chromosome segregation. It relaxes supercoiled DNA. Performs the decatenation events required during the replication of a circular DNA molecule. This chain is DNA topoisomerase 4 subunit B, found in Mycoplasma pneumoniae (strain ATCC 29342 / M129 / Subtype 1) (Mycoplasmoides pneumoniae).